A 173-amino-acid chain; its full sequence is RNA pyrophosphohydrolase (173 aa).

The region spanning 11–164 (PYRRCVGVVV…KKHVYRKVVS (154 aa)) is the Nudix hydrolase domain. Residues 52 to 73 (GGIDEGEEPLDAACRELYEETG) carry the Nudix box motif.

It belongs to the Nudix hydrolase family. RppH subfamily. A divalent metal cation is required as a cofactor.

In terms of biological role, accelerates the degradation of transcripts by removing pyrophosphate from the 5'-end of triphosphorylated RNA, leading to a more labile monophosphorylated state that can stimulate subsequent ribonuclease cleavage. The protein is RNA pyrophosphohydrolase of Bartonella quintana (strain Toulouse) (Rochalimaea quintana).